A 639-amino-acid polypeptide reads, in one-letter code: Probable methyltransferase PMT18 (639 aa).

Topologically, residues 1 to 19 (MAKENSSHSLAEAKRKRLT) are cytoplasmic. The helical; Signal-anchor for type II membrane protein transmembrane segment at 20–42 (WILCVSGLCILSYVLGSWQTNTV) threads the bilayer. A disordered region spans residues 41–86 (TVPTSSSEAYSRMGCDETSTTTRAQTTQTQTNPSSDDTSSSLSSSE). Residues 43–639 (PTSSSEAYSR…VKSYWTGPSS (597 aa)) lie on the Lumenal side of the membrane. The segment covering 58–85 (TSTTTRAQTTQTQTNPSSDDTSSSLSSS) has biased composition (low complexity). N-linked (GlcNAc...) asparagine glycans are attached at residues Asn104 and Asn427.

Belongs to the methyltransferase superfamily.

It localises to the endoplasmic reticulum membrane. The protein is Probable methyltransferase PMT18 of Arabidopsis thaliana (Mouse-ear cress).